The following is a 624-amino-acid chain: Ferredoxin-fold anticodon-binding domain-containing protein 1 (624 aa).

The FDX-ACB domain occupies 531–624 (LYPPCYVHDV…IQQHLYVIPR (94 aa)).

The chain is Ferredoxin-fold anticodon-binding domain-containing protein 1 (FDXACB1) from Homo sapiens (Human).